We begin with the raw amino-acid sequence, 489 residues long: Major aspartyl peptidase 1 (489 aa).

A signal peptide spans 1–16 (MHYLAVALPLLTLALA). The Peptidase A1 domain occupies 101–432 (YAGQVSIGTP…RYNPAAIGFA (332 aa)). Aspartate 119 is an active-site residue. Residue glycine 121 coordinates pepstatin A. A disulfide bridge connects residues cysteine 132 and cysteine 137. Residues threonine 161, glycine 163, and serine 164 each coordinate pepstatin A. Residue asparagine 266 is glycosylated (N-linked (GlcNAc...) asparagine). Tyrosine 286 is a pepstatin A binding site. Residue aspartate 317 is part of the active site. Residues threonine 320 and threonine 321 each coordinate pepstatin A. Cysteine 357 and cysteine 391 form a disulfide bridge. A disordered region spans residues 442–466 (AGNPSSSTTGGGTSGSNGGGSSSGA). Over residues 450–463 (TGGGTSGSNGGGSS) the composition is skewed to gly residues. The propeptide at 456–489 (GSNGGGSSSGAMERKGVQLGWLVGAVAVGVAAMI) is removed at pH 5.0; by autocatalysis.

It belongs to the peptidase A1 family. In terms of assembly, monomer. Activated by the autocatalytic cleavage of the propeptide. Cleaved at the end of the propeptide promiscuously from residue 76 to residue 79. C-terminal cleavage by autocatalysis at Gly-456 at the pH optimum indicating a possible regulatory or other function of this propeptide.

The protein localises to the secreted. Its activity is regulated as follows. Activated by low pH. Inhibited by pepstatin A with an IC(50) of 1.4 nM. Inhibited by acetyl pepstatin. Inhibited by HIV antiretroviral therapy protease inhibitors including amprenavir and ritonavir. Inhibited by HIV-1 protease inhibitor brecanavir with an approximate IC(50) of 352 nM. Inhibited by HIV-1 protease inhibitors CGP53437 and GS-8374. From the tested peptidomimetic inhibitor molecules, macrocycles containing P2-P3' tethered side chains, statines in P1 and an alpha amino acid in P2' are the best. From the linear peptidomimetic inhibitors, the ones with a phenylstatine or hydroxyethylamine scissile bond isoster are better than compounds with a reduced bond or a homo-amide. Overall, inhibitors with a phenylalanine side chain, either unsubstituted or with a small substituent, is preferred in P1 while a bulkier P1 side chain leads to lower inhibition. Possesses prevalent extracellular endopeptidase activity at low pH condition. Required for high-density growth in acidic environments. Broad substrate specificity with preference cleavage of the peptide substrate between hydrophobic amino acids. Cleaves substrate at P1-P1' between Phe-Leu. Positively charged amino acids are preferred at P2. Prefers hydrophobic amino acids at the P3 and P4 positions. Cleaves substrate also at P1'-P2' between Leu-Val to some degree. Required for virulence in mouse inhalation model of infection. This chain is Major aspartyl peptidase 1, found in Cryptococcus neoformans var. grubii serotype A (strain H99 / ATCC 208821 / CBS 10515 / FGSC 9487) (Filobasidiella neoformans var. grubii).